Consider the following 527-residue polypeptide: GMP synthase [glutamine-hydrolyzing] (527 aa).

Residues 20–208 form the Glutamine amidotransferase type-1 domain; sequence SVVILDYGSQ…LFDVCGCAPT (189 aa). Catalysis depends on cysteine 97, which acts as the Nucleophile. Active-site residues include histidine 182 and glutamate 184. The GMPS ATP-PPase domain maps to 209–402; sequence WTAESFVEQA…LGLPEEIVQR (194 aa). 236–242 serves as a coordination point for ATP; that stretch reads SGGVDSS.

In terms of assembly, homodimer.

It catalyses the reaction XMP + L-glutamine + ATP + H2O = GMP + L-glutamate + AMP + diphosphate + 2 H(+). The protein operates within purine metabolism; GMP biosynthesis; GMP from XMP (L-Gln route): step 1/1. In terms of biological role, catalyzes the synthesis of GMP from XMP. The sequence is that of GMP synthase [glutamine-hydrolyzing] from Thermomicrobium roseum (strain ATCC 27502 / DSM 5159 / P-2).